A 163-amino-acid chain; its full sequence is NADH-quinone oxidoreductase subunit I (163 aa).

4Fe-4S ferredoxin-type domains follow at residues 53–83 (LRRY…IEAG) and 94–123 (VRYD…EGPN). [4Fe-4S] cluster-binding residues include Cys-63, Cys-66, Cys-69, Cys-73, Cys-103, Cys-106, Cys-109, and Cys-113.

The protein belongs to the complex I 23 kDa subunit family. NDH-1 is composed of 14 different subunits. Subunits NuoA, H, J, K, L, M, N constitute the membrane sector of the complex. [4Fe-4S] cluster serves as cofactor.

The protein resides in the cell inner membrane. The catalysed reaction is a quinone + NADH + 5 H(+)(in) = a quinol + NAD(+) + 4 H(+)(out). Functionally, NDH-1 shuttles electrons from NADH, via FMN and iron-sulfur (Fe-S) centers, to quinones in the respiratory chain. The immediate electron acceptor for the enzyme in this species is believed to be ubiquinone. Couples the redox reaction to proton translocation (for every two electrons transferred, four hydrogen ions are translocated across the cytoplasmic membrane), and thus conserves the redox energy in a proton gradient. The sequence is that of NADH-quinone oxidoreductase subunit I from Allorhizobium ampelinum (strain ATCC BAA-846 / DSM 112012 / S4) (Agrobacterium vitis (strain S4)).